The chain runs to 469 residues: Spliceosome-associated protein CWC27 homolog (469 aa).

At Ser2 the chain carries N-acetylserine. One can recognise a PPIase cyclophilin-type domain in the interval 11-166; that stretch reads TNGKVLLKTT…NPHRIKSCEV (156 aa). A compositionally biased stretch (basic and acidic residues) spans 175 to 193; sequence TPREIKKPKNEKPEEEVKK. Disordered stretches follow at residues 175–415 and 428–469; these read TPRE…DDEG and RKVK…KERR. Positions 206–229 form a coiled coil; that stretch reads SFGEEAEEEEEEVNRVSQSMKGRS. The span at 231–241 shows a compositional bias: basic and acidic residues; sequence SSHDLLKDDPH. The span at 256–278 shows a compositional bias: acidic residues; the sequence is TGDLEDDGEDDSAERDEYMEDDE. 2 stretches are compositionally biased toward basic and acidic residues: residues 302–341 and 356–368; these read GDGE…KVEE and EYRR…EALR. A coiled-coil region spans residues 309–371; sequence ASRSEELRKE…QKYEALRKQQ (63 aa). A compositionally biased stretch (polar residues) spans 384 to 403; that stretch reads ALLSQFKSKLTQAITETPEN. The segment covering 454–469 has biased composition (basic and acidic residues); the sequence is RREESKKLLREKKERR.

The protein belongs to the cyclophilin-type PPIase family. Part of the activated spliceosome B/catalytic step 1 spliceosome, one of the forms of the spliceosome which has a well-formed active site but still cannot catalyze the branching reaction and is composed at least of 52 proteins, the U2, U5 and U6 snRNAs and the pre-mRNA. Recruited during early steps of activated spliceosome B maturation, it is probably one of the first proteins released from this complex as he matures to the spliceosome C complex. Component of the minor spliceosome, which splices U12-type introns.

It is found in the nucleus. In terms of biological role, as part of the spliceosome, plays a role in pre-mRNA splicing. Probable inactive PPIase with no peptidyl-prolyl cis-trans isomerase activity. As a component of the minor spliceosome, involved in the splicing of U12-type introns in pre-mRNAs. The sequence is that of Spliceosome-associated protein CWC27 homolog from Mus musculus (Mouse).